A 236-amino-acid polypeptide reads, in one-letter code: Protein YIPF6 (236 aa).

An N-acetylalanine modification is found at A2. At 2–84 the chain is on the cytoplasmic side; the sequence is AEAEESPGDP…HVLYPRKSNT (83 aa). Phosphoserine is present on S7. Residues 85–105 traverse the membrane as a helical segment; that stretch reads LLRDWDLWGPLILCVTLALML. Residues 106–115 are Lumenal-facing; it reads QRDSADSEKD. A helical transmembrane segment spans residues 116-136; sequence GGPQFAEVFVIVWFGAVTITL. Over 137–146 the chain is Cytoplasmic; that stretch reads NSKLLGGNIS. Residues 147–167 traverse the membrane as a helical segment; the sequence is FFQSLCVLGYCILPLTVAMLI. Residues 168-184 are Lumenal-facing; that stretch reads CRLVLLADPGPVNFMVR. The chain crosses the membrane as a helical span at residues 185–205; it reads LFVVIVMFAWSIVASTAFLAD. Residues 206-212 are Cytoplasmic-facing; it reads SQPPNRR. Residues 213-233 form a helical membrane-spanning segment; the sequence is ALAVYPVFLFYFVISWMILTF. Residues 234-236 lie on the Lumenal side of the membrane; the sequence is TPQ.

Belongs to the YIP1 family. Predominantly interacts with YIPF1 or YIPF2, but may also form a ternary complex with YIPF1 and YIPF2. This interaction may stabilize YIPF1 and YIPF2.

It is found in the golgi apparatus membrane. In terms of biological role, may be required for stable YIPF1 and YIPF2 protein expression. In Homo sapiens (Human), this protein is Protein YIPF6 (YIPF6).